We begin with the raw amino-acid sequence, 201 residues long: 3-isopropylmalate dehydratase small subunit (201 aa).

It belongs to the LeuD family. LeuD type 1 subfamily. Heterodimer of LeuC and LeuD.

The catalysed reaction is (2R,3S)-3-isopropylmalate = (2S)-2-isopropylmalate. It functions in the pathway amino-acid biosynthesis; L-leucine biosynthesis; L-leucine from 3-methyl-2-oxobutanoate: step 2/4. Its function is as follows. Catalyzes the isomerization between 2-isopropylmalate and 3-isopropylmalate, via the formation of 2-isopropylmaleate. This chain is 3-isopropylmalate dehydratase small subunit, found in Methylorubrum populi (strain ATCC BAA-705 / NCIMB 13946 / BJ001) (Methylobacterium populi).